Here is a 254-residue protein sequence, read N- to C-terminus: MSTKNRSDKSSSSSITKDKYTIILPTYKERENLPIIIWLISTELEKCFIDYEVVIVEDNSPDGTLEVAQQLQKIYGEEKIKILSRPGKMGLGSAYMDGIKKSTGNWVILMDADLSHHPKFIPQFIEKQKKLNCEIVTGTRYQSGGGVFGWNLYRKLTSRVANYIASVLLTPGVSDLTGSFRLYRKDVLEKLITQNKSKGYVFQVEMMVRANQLGYQVGEVPITFVDRIFGVSNLDSGEIVGFLKSVLNLFMNIE.

Residues Pro25, Tyr27, Glu29, Val56, Asp58, Asp111, Ala112, Asp113, Arg140, and Arg227 each coordinate GDP-alpha-D-mannose. Asp113 lines the Mg(2+) pocket. Asp113 is a Mn(2+) binding site.

Belongs to the glycosyltransferase 2 family. As to quaternary structure, component of the dolichol-phosphate mannose (DPM) synthase complex composed of dpm1, dpm2 and dpm3. Mg(2+) is required as a cofactor. Mn(2+) serves as cofactor. Requires Ca(2+) as cofactor.

It is found in the endoplasmic reticulum. The catalysed reaction is a di-trans,poly-cis-dolichyl phosphate + GDP-alpha-D-mannose = a di-trans,poly-cis-dolichyl beta-D-mannosyl phosphate + GDP. It participates in protein modification; protein glycosylation. Transfers mannose from GDP-mannose to dolichol monophosphate to form dolichol phosphate mannose (Dol-P-Man) which is the mannosyl donor in pathways leading to N-glycosylation, glycosyl phosphatidylinositol membrane anchoring, and O-mannosylation of proteins; catalytic subunit of the dolichol-phosphate mannose (DPM) synthase complex. The sequence is that of Dolichol-phosphate mannosyltransferase subunit 1 (dpm1) from Dictyostelium discoideum (Social amoeba).